A 162-amino-acid chain; its full sequence is Urease accessory protein UreE 1 (162 aa).

The disordered stretch occupies residues 143 to 162; sequence SGGHQHHHGHDHDHHHPDHE. The segment covering 152-162 has biased composition (basic and acidic residues); the sequence is HDHDHHHPDHE.

Belongs to the UreE family.

The protein resides in the cytoplasm. Functionally, involved in urease metallocenter assembly. Binds nickel. Probably functions as a nickel donor during metallocenter assembly. The protein is Urease accessory protein UreE 1 of Brucella suis biovar 1 (strain 1330).